The following is a 122-amino-acid chain: MIQQETRLKVADNSGAREILTIKVLGGSGRKFANIGDVIVASVKQATPGGAVKKGDVVKAVIVRTKTGARRPDGSYIKFDDNAAVIIRDDKTPRGTRIFGPVARELREGGYMKIVSLAPEVL.

It belongs to the universal ribosomal protein uL14 family. In terms of assembly, part of the 50S ribosomal subunit. Forms a cluster with proteins L3 and L19. In the 70S ribosome, L14 and L19 interact and together make contacts with the 16S rRNA in bridges B5 and B8.

In terms of biological role, binds to 23S rRNA. Forms part of two intersubunit bridges in the 70S ribosome. In Streptococcus agalactiae serotype Ia (strain ATCC 27591 / A909 / CDC SS700), this protein is Large ribosomal subunit protein uL14.